A 230-amino-acid polypeptide reads, in one-letter code: 3-dehydroquinate dehydratase (230 aa).

3-dehydroquinate-binding positions include S26, 51–53 (EIR), and R84. Residue H127 is the Proton donor/acceptor of the active site. K150 acts as the Schiff-base intermediate with substrate in catalysis. Residues R190, T209, and Q213 each coordinate 3-dehydroquinate.

The protein belongs to the type-I 3-dehydroquinase family. Homodimer.

It catalyses the reaction 3-dehydroquinate = 3-dehydroshikimate + H2O. It functions in the pathway metabolic intermediate biosynthesis; chorismate biosynthesis; chorismate from D-erythrose 4-phosphate and phosphoenolpyruvate: step 3/7. Involved in the third step of the chorismate pathway, which leads to the biosynthesis of aromatic amino acids. Catalyzes the cis-dehydration of 3-dehydroquinate (DHQ) and introduces the first double bond of the aromatic ring to yield 3-dehydroshikimate. In Thermoplasma volcanium (strain ATCC 51530 / DSM 4299 / JCM 9571 / NBRC 15438 / GSS1), this protein is 3-dehydroquinate dehydratase.